The following is a 346-amino-acid chain: Tetraacyldisaccharide 4'-kinase (346 aa).

54-61 (TVGGAGKT) contributes to the ATP binding site.

Belongs to the LpxK family.

It carries out the reaction a lipid A disaccharide + ATP = a lipid IVA + ADP + H(+). The protein operates within glycolipid biosynthesis; lipid IV(A) biosynthesis; lipid IV(A) from (3R)-3-hydroxytetradecanoyl-[acyl-carrier-protein] and UDP-N-acetyl-alpha-D-glucosamine: step 6/6. In terms of biological role, transfers the gamma-phosphate of ATP to the 4'-position of a tetraacyldisaccharide 1-phosphate intermediate (termed DS-1-P) to form tetraacyldisaccharide 1,4'-bis-phosphate (lipid IVA). This chain is Tetraacyldisaccharide 4'-kinase, found in Rhizobium etli (strain ATCC 51251 / DSM 11541 / JCM 21823 / NBRC 15573 / CFN 42).